The chain runs to 274 residues: 2,3,4,5-tetrahydropyridine-2,6-dicarboxylate N-succinyltransferase (274 aa).

Substrate is bound by residues Arg-104 and Asp-141.

This sequence belongs to the transferase hexapeptide repeat family. Homotrimer.

The protein resides in the cytoplasm. The catalysed reaction is (S)-2,3,4,5-tetrahydrodipicolinate + succinyl-CoA + H2O = (S)-2-succinylamino-6-oxoheptanedioate + CoA. It participates in amino-acid biosynthesis; L-lysine biosynthesis via DAP pathway; LL-2,6-diaminopimelate from (S)-tetrahydrodipicolinate (succinylase route): step 1/3. The sequence is that of 2,3,4,5-tetrahydropyridine-2,6-dicarboxylate N-succinyltransferase from Shewanella halifaxensis (strain HAW-EB4).